A 219-amino-acid chain; its full sequence is Uracil-DNA glycosylase (219 aa).

Asp-61 acts as the Proton acceptor in catalysis.

It belongs to the uracil-DNA glycosylase (UDG) superfamily. UNG family.

The protein resides in the cytoplasm. It catalyses the reaction Hydrolyzes single-stranded DNA or mismatched double-stranded DNA and polynucleotides, releasing free uracil.. Functionally, excises uracil residues from the DNA which can arise as a result of misincorporation of dUMP residues by DNA polymerase or due to deamination of cytosine. This chain is Uracil-DNA glycosylase, found in Haemophilus influenzae (strain 86-028NP).